Consider the following 347-residue polypeptide: NADH-ubiquinone oxidoreductase chain 2 (347 aa).

10 helical membrane passes run 3–23 (PPIL…VLTS), 25–45 (HWLL…PILM), 59–79 (YFLT…INLL), 93–115 (MAST…HFWV), 149–169 (INTN…GWGG), 178–198 (ILAY…TYNP), 200–220 (VMIL…MLFI), 242–262 (SFIL…GFIP), 274–294 (EMII…YFYM), and 323–343 (MALL…TPMM).

The protein belongs to the complex I subunit 2 family. In terms of assembly, core subunit of respiratory chain NADH dehydrogenase (Complex I) which is composed of 45 different subunits. Interacts with TMEM242.

It is found in the mitochondrion inner membrane. The enzyme catalyses a ubiquinone + NADH + 5 H(+)(in) = a ubiquinol + NAD(+) + 4 H(+)(out). Functionally, core subunit of the mitochondrial membrane respiratory chain NADH dehydrogenase (Complex I) which catalyzes electron transfer from NADH through the respiratory chain, using ubiquinone as an electron acceptor. Essential for the catalytic activity and assembly of complex I. In Nandinia binotata (African palm civet), this protein is NADH-ubiquinone oxidoreductase chain 2.